The following is an 81-amino-acid chain: RNA-binding protein Hfq (81 aa).

In terms of domain architecture, Sm spans 10–69 (DPFLNTLRREHVPVSIYLVNGIKLQGQIESFDQYVVLLRNTVTQMVYKHAISTIVPGRAV).

The protein belongs to the Hfq family. Homohexamer.

In terms of biological role, RNA chaperone that binds small regulatory RNA (sRNAs) and mRNAs to facilitate mRNA translational regulation in response to envelope stress, environmental stress and changes in metabolite concentrations. Also binds with high specificity to tRNAs. In Variovorax paradoxus (strain S110), this protein is RNA-binding protein Hfq.